A 126-amino-acid chain; its full sequence is Hydrogenase maturation factor HypA (126 aa).

H2 serves as a coordination point for Ni(2+). Positions 78, 81, 97, and 100 each coordinate Zn(2+).

This sequence belongs to the HypA/HybF family.

Functionally, involved in the maturation of [NiFe] hydrogenases. Required for nickel insertion into the metal center of the hydrogenase. The polypeptide is Hydrogenase maturation factor HypA (Methanococcus maripaludis (strain DSM 14266 / JCM 13030 / NBRC 101832 / S2 / LL)).